We begin with the raw amino-acid sequence, 178 residues long: N-alpha-acetyltransferase 20 (178 aa).

The 156-residue stretch at 2 to 157 (TSLRPFTCDD…DAYDMRKALS (156 aa)) folds into the N-acetyltransferase domain. The interval 159–178 (DTEKKSIVPLPHPVRPEDIE) is disordered.

The protein belongs to the acetyltransferase family. ARD1 subfamily. As to quaternary structure, component of the N-terminal acetyltransferase B (NatB) complex which is composed of naa20 and naa25.

Its subcellular location is the cytoplasm. The protein resides in the nucleus. It carries out the reaction N-terminal L-methionyl-L-asparaginyl-[protein] + acetyl-CoA = N-terminal N(alpha)-acetyl-L-methionyl-L-asparaginyl-[protein] + CoA + H(+). The catalysed reaction is N-terminal L-methionyl-L-glutaminyl-[protein] + acetyl-CoA = N-terminal N(alpha)-acetyl-L-methionyl-L-glutaminyl-[protein] + CoA + H(+). The enzyme catalyses N-terminal L-methionyl-L-aspartyl-[protein] + acetyl-CoA = N-terminal N(alpha)-acetyl-L-methionyl-L-aspartyl-[protein] + CoA + H(+). It catalyses the reaction N-terminal L-methionyl-L-glutamyl-[protein] + acetyl-CoA = N-terminal N(alpha)-acetyl-L-methionyl-L-glutamyl-[protein] + CoA + H(+). Catalytic subunit of the NatB complex which catalyzes acetylation of the N-terminal methionine residues of peptides beginning with Met-Asp, Met-Glu, Met-Asn and Met-Gln. Proteins with cell cycle functions are overrepresented in the pool of NatB substrates. Required for maintaining the structure and function of actomyosin fibers and for proper cellular migration. The protein is N-alpha-acetyltransferase 20 (naa20) of Xenopus tropicalis (Western clawed frog).